The primary structure comprises 345 residues: Tyrosine-binding protein (345 aa).

A signal peptide spans 1–23 (MIKSKKILSLIIAGVLGVSMLTG). Cys24 carries N-palmitoyl cysteine lipidation. Cys24 carries the S-diacylglycerol cysteine lipid modification.

As to quaternary structure, the complex is probably composed of two ATP-binding proteins (CDR20291_0806), two transmembrane proteins (CDR20291_0807) and a solute-binding protein (CDR20291_0805).

It is found in the cell membrane. Functionally, probably part of an ABC transporter complex involved in tyrosine uptake. May also import phenylalanine. This chain is Tyrosine-binding protein, found in Clostridioides difficile (strain R20291) (Peptoclostridium difficile).